Here is a 213-residue protein sequence, read N- to C-terminus: mRNA-decapping protein OPG121 (213 aa).

The N(7)-methyl-GTP site is built by Glu-16 and Arg-50. The Nudix hydrolase domain maps to 30–209 (KDTHVFAACI…EYLSYIYNML (180 aa)). Residues 111–132 (GKLDKKESIKDCLRRELKEESD) carry the Nudix box motif. Residue Glu-126 is the Nucleophile of the active site. 2 residues coordinate Mg(2+): Glu-126 and Glu-130. Asp-151 contacts N(7)-methyl-GTP. Glu-183 provides a ligand contact to Mg(2+).

This sequence belongs to the Nudix hydrolase family. Requires Mg(2+) as cofactor. The cofactor is Mn(2+).

The enzyme catalyses a 5'-end (N(7)-methyl 5'-triphosphoguanosine)-guanosine in mRNA + H2O = a 5'-end phospho-guanosine in mRNA + N(7)-methyl-GDP + 2 H(+). In terms of biological role, decapping enzyme that remove the protective 5'-cap from both host and viral mRNAs to commit transcripts for decay by the cellular exonuclease XRN1. Accelerates viral and cellular mRNA turnover to eliminate competing host mRNAs and allow stage-specific synthesis of viral proteins. Acceleration of the turnover of cellular transcripts may even promote the shutoff of host protein synthesis. This Vaccinia virus (strain Western Reserve) (VACV) protein is mRNA-decapping protein OPG121 (OPG121).